The chain runs to 162 residues: Protein cornichon homolog 2 (162 aa).

The Cytoplasmic portion of the chain corresponds to 1 to 10; the sequence is MAFTFAAFCY. The chain crosses the membrane as a helical span at residues 11 to 31; that stretch reads MLTLVLCASLIFFIIWHIIAF. Residues 32 to 72 are Lumenal-facing; sequence DELRTDFKNPIEQGNPSRARERVKNVERICCLLRKLVVPEY. Residues 73-93 form a helical membrane-spanning segment; it reads CIHGLFCLMFMCAAEWVTLGL. Topologically, residues 94-138 are cytoplasmic; that stretch reads NIPLLFYHLWRYFHRPADGSEVMFDPVSIMNVDILNYCQKEAWCK. The chain crosses the membrane as a helical span at residues 139-161; it reads LAFYLLSFFYYLYRVGATVRYVS. Residue A162 is a topological domain, lumenal.

This sequence belongs to the cornichon family.

The protein resides in the membrane. Its function is as follows. Regulates the trafficking and gating properties of AMPA-selective glutamate receptors (AMPARs). This chain is Protein cornichon homolog 2 (cnih2), found in Xenopus tropicalis (Western clawed frog).